Here is a 474-residue protein sequence, read N- to C-terminus: Serine/threonine-protein kinase ksp1 (474 aa).

A Protein kinase domain is found at 9-280 (YKVERPLNKG…EAVLAVTKWT (272 aa)). ATP-binding positions include 15–23 (LNKGSYGTV) and Lys43. Catalysis depends on Asp137, which acts as the Proton acceptor. Residues 345–373 (VDENISTSSSPRSPASLAPVNNSERSYDS) form a disordered region. Residues 350–363 (STSSSPRSPASLAP) show a composition bias toward low complexity. Phosphoserine is present on residues Ser353, Ser354, Ser357, Ser378, Ser404, and Ser413.

The protein belongs to the protein kinase superfamily. Ser/Thr protein kinase family.

It is found in the cytoplasm. Its subcellular location is the nucleus. It carries out the reaction L-seryl-[protein] + ATP = O-phospho-L-seryl-[protein] + ADP + H(+). The enzyme catalyses L-threonyl-[protein] + ATP = O-phospho-L-threonyl-[protein] + ADP + H(+). In Schizosaccharomyces pombe (strain 972 / ATCC 24843) (Fission yeast), this protein is Serine/threonine-protein kinase ksp1 (ksp1).